Reading from the N-terminus, the 122-residue chain is Transcription initiation factor IIA subunit 2 (122 aa).

A phosphoserine mark is found at Ser-95 and Ser-102.

This sequence belongs to the TFIIA subunit 2 family. TFIIA is a heterodimer composed of the large TOA1 and a small TOA2 subunits. Interacts with TBP. Interacts with TAF11. Interacts with KAP122.

The protein localises to the cytoplasm. Its subcellular location is the nucleus. Its function is as follows. TFIIA is a component of the transcription machinery of RNA polymerase II and plays an important role in transcriptional activation. TFIIA in a complex with TBP mediates transcriptional activity. In Saccharomyces cerevisiae (strain ATCC 204508 / S288c) (Baker's yeast), this protein is Transcription initiation factor IIA subunit 2 (TOA2).